The primary structure comprises 453 residues: MTTDTIVAQATAPGRGGVGIVRVSGPAAEQVAEIVLGKLPRVRYAEYLPFRDEQGQPLDQGIALLFKAPNSFTGEDVLELQGHGGPVIMDMLVRRILQIKGLRPARPGEFSERAFMNDKLDLAQAEAIADLIEASSEQAARSAMHSLQGQFSGKIQQLVESLTRLRIYVEAAIDFPDEEIDFLSDGKVAGDLYAIMAELDDVRGEAKQGALLREGMKVVIAGRPNAGKSSLLNALAGRESAIVTEIAGTTRDVLREHIHLDGMPLHIIDTAGLRDTQDKVEQIGIERAWAEIEQADRVLFMVDGTTTAAVDPREIWPEFVDRLPKKIGLTVVRNKADLTGEDLAPSQELGHAVYRISAKTELGLSALREHLKACMGFQGNTEGGFMARRRHLDALERAAERLLVAKEQLEVFVAGELVAEELRLAQESLSEITGEFSSDDLLGRIFSSFCIGK.

Arg22, Glu79, and Lys119 together coordinate (6S)-5-formyl-5,6,7,8-tetrahydrofolate. The region spanning 215–376 (GMKVVIAGRP…LREHLKACMG (162 aa)) is the TrmE-type G domain. Asn225 lines the K(+) pocket. GTP contacts are provided by residues 225–230 (NAGKSS), 244–250 (TEIAGTT), 269–272 (DTAG), and 334–337 (NKAD). Ser229 is a binding site for Mg(2+). K(+) is bound by residues Thr244, Ile246, and Thr249. Thr250 contacts Mg(2+). Position 453 (Lys453) interacts with (6S)-5-formyl-5,6,7,8-tetrahydrofolate.

It belongs to the TRAFAC class TrmE-Era-EngA-EngB-Septin-like GTPase superfamily. TrmE GTPase family. As to quaternary structure, homodimer. Heterotetramer of two MnmE and two MnmG subunits. K(+) serves as cofactor.

The protein resides in the cytoplasm. In terms of biological role, exhibits a very high intrinsic GTPase hydrolysis rate. Involved in the addition of a carboxymethylaminomethyl (cmnm) group at the wobble position (U34) of certain tRNAs, forming tRNA-cmnm(5)s(2)U34. In Aeromonas hydrophila subsp. hydrophila (strain ATCC 7966 / DSM 30187 / BCRC 13018 / CCUG 14551 / JCM 1027 / KCTC 2358 / NCIMB 9240 / NCTC 8049), this protein is tRNA modification GTPase MnmE.